The following is a 118-amino-acid chain: ATP-dependent Clp protease adapter protein ClpS (118 aa).

Residues 1–24 (MNGSSNSGSPGGGQTGDDDGTGFD) are disordered.

Belongs to the ClpS family. In terms of assembly, binds to the N-terminal domain of the chaperone ClpA.

Functionally, involved in the modulation of the specificity of the ClpAP-mediated ATP-dependent protein degradation. This Hyphomonas neptunium (strain ATCC 15444) protein is ATP-dependent Clp protease adapter protein ClpS.